Reading from the N-terminus, the 388-residue chain is Flavin-dependent monooxygenase (388 aa).

Residues 26–27 and 45–48 contribute to the FAD site; these read PV and YERD. An NADPH-binding site is contributed by arginine 54. The FAD site is built by aspartate 61, arginine 117, and leucine 139. Glutamine 192 and arginine 213 together coordinate substrate. Residues aspartate 311 and 321–324 contribute to the FAD site; that span reads GQGV.

The protein belongs to the aromatic-ring hydroxylase family. TetX subfamily. Monomer. FAD serves as cofactor.

It is found in the cytoplasm. It carries out the reaction a tetracycline + NADPH + O2 + H(+) = an 11a-hydroxytetracycline + NADP(+) + H2O. The enzyme catalyses tetracycline + NADPH + O2 + H(+) = 11a-hydroxytetracycline + NADP(+) + H2O. It catalyses the reaction tigecycline + NADPH + O2 + H(+) = 11a-hydroxytigecycline + NADP(+) + H2O. The catalysed reaction is oxytetracycline + NADPH + O2 + H(+) = 11a-hydroxy-oxytetracycline + NADP(+) + H2O. Anhydrotetracycline, a poor substrate, prevents tetracycline degradation in vitro. In terms of biological role, an FAD-requiring monooxygenase active on tetracycline antibiotic derivatives, which leads to their inactivation. Hydroxylates carbon 11a of oxytetracycline and tigecycline. Acts on many tetracycline analogs (chlorotetracycline, demeclocycline, doxycycline, minocycline, oxytetracyclinee), probably by monooxygenization. Tigecycline, a new generation tetracycline antibiotic, is rendered less effective against E.coli by this monooxygenation, is much weaker at inhibiting translation in vitro and binds Mg(2+) considerably less well. Expression in E.coli BW25113 reduces its growth rate about 5%. The reaction probably proceeds by FAD reduction by NADPH and, second, hydroxylation of antibiotic in a ping-pong mechanism. Degrades chlortetracycline, probably by monooxygenation. Slowly oxidizes anhydrotetracycline, the final substrate in tetracycline biosynthesis. This Bacteroides thetaiotaomicron protein is Flavin-dependent monooxygenase.